The following is a 258-amino-acid chain: Large ribosomal subunit protein bL28m (258 aa).

Residues 1–21 constitute a mitochondrion transit peptide; it reads MQKIFRPFQLTRGFTSSVKNF.

Belongs to the bacterial ribosomal protein bL28 family. As to quaternary structure, component of the mitochondrial large ribosomal subunit (mt-LSU). Mature yeast 74S mitochondrial ribosomes consist of a small (37S) and a large (54S) subunit. The 37S small subunit contains a 15S ribosomal RNA (15S mt-rRNA) and 34 different proteins. The 54S large subunit contains a 21S rRNA (21S mt-rRNA) and 46 different proteins.

Its subcellular location is the mitochondrion. Its function is as follows. Component of the mitochondrial ribosome (mitoribosome), a dedicated translation machinery responsible for the synthesis of mitochondrial genome-encoded proteins, including at least some of the essential transmembrane subunits of the mitochondrial respiratory chain. The mitoribosomes are attached to the mitochondrial inner membrane and translation products are cotranslationally integrated into the membrane. The polypeptide is Large ribosomal subunit protein bL28m (MRPL24) (Saccharomyces cerevisiae (strain ATCC 204508 / S288c) (Baker's yeast)).